The following is a 271-amino-acid chain: MVLTAVLLLLAACAGPAQGLGSFVHCEPCDEKALSMCPPSPLGCELVKEPGCGCCMTCALAEGQSCGVYTERCAQGLRCLPRQDEEKPLHALLHGRGVCLNEKSYREQAKIERDSREHEEPTTSEMAEETYSPKIFRPKHTRISELKAEAVKKDRRKKLTQSKFVGGAENTAHPRVILAPEMRQESEQGPCRRHMEASLQELKASPRMVPRAVYLPNCDRKGFYKRKQCKPSRGRKRGICWCVDKYGMKLPGMEYVDGDFQCHSFDSSNVE.

A signal peptide spans 1-19; it reads MVLTAVLLLLAACAGPAQG. The IGFBP N-terminal domain occupies 22–102; that stretch reads SFVHCEPCDE…LHGRGVCLNE (81 aa). Cystine bridges form between Cys26–Cys52, Cys29–Cys54, Cys37–Cys55, Cys44–Cys58, Cys66–Cys79, and Cys73–Cys99. Over residues 109-121 the composition is skewed to basic and acidic residues; it reads AKIERDSREHEEP. Residues 109-129 are disordered; that stretch reads AKIERDSREHEEPTTSEMAEE. Position 115 is a phosphoserine (Ser115). The Thyroglobulin type-1 domain maps to 188–262; that stretch reads QGPCRRHMEA…MEYVDGDFQC (75 aa). Disulfide bonds link Cys191/Cys218, Cys229/Cys240, and Cys242/Cys262.

In terms of assembly, interacts with IGF1; this interaction enhances the growth stimulatory effects of IGF1 on fibroblasts. Interacts with CAV1; this interaction allows trafficking of IGFBP5 from the plasma membrane to the nucleus. Interacts with NCL; this interaction is necessary for IGFBP5 localization to the nucleus.

Its subcellular location is the secreted. The protein resides in the cytoplasm. It localises to the nucleus. Multifunctional protein that plays a critical role in regulating the availability of IGFs to their receptors and thereby regulates IGF-mediated cellular processes including proliferation, differentiation, and apoptosis in a cell-type specific manner. Increases the cell proliferation of osteoblasts, intestinal smooth muscle cells and neuroblastoma cells. Enhances adhesion and survival of epithelial cells but decreases adhesion of mesenchymal cells. Once secreted, acts as a major mediator of mTORC1-dependent feedback inhibition of IGF1 signaling. Also plays a role in the induction of extracellular matrix (ECM) production and deposition independently of its nuclear translocation and binding to IGFs. Acts itself as a growth factor that can act independently of IGFs to regulate bone formation. Acts as a ligand for the ROR1 receptor which triggers formation of ROR1/HER2 heterodimer to enhance CREB oncogenic signaling. The chain is Insulin-like growth factor-binding protein 5 (IGFBP5) from Sus scrofa (Pig).